Consider the following 196-residue polypeptide: Imidazole glycerol phosphate synthase subunit HisH (196 aa).

The Glutamine amidotransferase type-1 domain occupies K2–L196. Catalysis depends on C77, which acts as the Nucleophile. Catalysis depends on residues H178 and E180.

In terms of assembly, heterodimer of HisH and HisF.

It localises to the cytoplasm. The catalysed reaction is 5-[(5-phospho-1-deoxy-D-ribulos-1-ylimino)methylamino]-1-(5-phospho-beta-D-ribosyl)imidazole-4-carboxamide + L-glutamine = D-erythro-1-(imidazol-4-yl)glycerol 3-phosphate + 5-amino-1-(5-phospho-beta-D-ribosyl)imidazole-4-carboxamide + L-glutamate + H(+). It carries out the reaction L-glutamine + H2O = L-glutamate + NH4(+). It functions in the pathway amino-acid biosynthesis; L-histidine biosynthesis; L-histidine from 5-phospho-alpha-D-ribose 1-diphosphate: step 5/9. In terms of biological role, IGPS catalyzes the conversion of PRFAR and glutamine to IGP, AICAR and glutamate. The HisH subunit catalyzes the hydrolysis of glutamine to glutamate and ammonia as part of the synthesis of IGP and AICAR. The resulting ammonia molecule is channeled to the active site of HisF. This is Imidazole glycerol phosphate synthase subunit HisH from Bacteroides fragilis (strain YCH46).